A 332-amino-acid polypeptide reads, in one-letter code: Biotin synthase (332 aa).

A Radical SAM core domain is found at 53 to 282; sequence HFGKKVKLNM…TKEIRISGGR (230 aa). Cys71, Cys75, and Cys78 together coordinate [4Fe-4S] cluster. [2Fe-2S] cluster contacts are provided by Cys115, Cys147, Cys207, and Arg277.

Belongs to the radical SAM superfamily. Biotin synthase family. In terms of assembly, homodimer. The cofactor is [4Fe-4S] cluster. [2Fe-2S] cluster is required as a cofactor.

It catalyses the reaction (4R,5S)-dethiobiotin + (sulfur carrier)-SH + 2 reduced [2Fe-2S]-[ferredoxin] + 2 S-adenosyl-L-methionine = (sulfur carrier)-H + biotin + 2 5'-deoxyadenosine + 2 L-methionine + 2 oxidized [2Fe-2S]-[ferredoxin]. It functions in the pathway cofactor biosynthesis; biotin biosynthesis; biotin from 7,8-diaminononanoate: step 2/2. In terms of biological role, catalyzes the conversion of dethiobiotin (DTB) to biotin by the insertion of a sulfur atom into dethiobiotin via a radical-based mechanism. This Bacillus cereus (strain G9842) protein is Biotin synthase.